Reading from the N-terminus, the 415-residue chain is Protein CDC73 homolog (415 aa).

The protein belongs to the CDC73 family. Component of the nuclear PAF1 complex (PAF1C), which consists of VIP2/ELF7/PAF1, VIP3/SKI8/WDR61, VIP4/LEO1, VIP5/RTF1, VIP6/ELF8/CTR9 and CDC73. Expressed in root tips, shoot apex, young leaves and flowers, especially in stamen filaments and carpels.

It localises to the nucleus. Functionally, component of the PAF1 complex (PAF1C) which is involved in histone modifications such as methylation on histone H3 'Lys-4' (H3K4me3). Involved in regulation of flowering time. Required for the expression of the flowering repressors FLC and MADS-box genes of the MAF family. Required for histone H3 trimethylation on 'Lys-4' (H3K4me3) at the FLC locus. Prevents trimethylation on 'Lys-27' (H3K27me3) at the same locus. This Arabidopsis thaliana (Mouse-ear cress) protein is Protein CDC73 homolog.